The sequence spans 149 residues: Large ribosomal subunit protein bL20m (149 aa).

Residues 1–9 (MVFLSAPLW) constitute a mitochondrion transit peptide.

Belongs to the bacterial ribosomal protein bL20 family. Component of the mitochondrial ribosome large subunit (39S) which comprises a 16S rRNA and about 50 distinct proteins. Interacts with OXA1L.

It is found in the mitochondrion. The protein is Large ribosomal subunit protein bL20m (MRPL20) of Bos taurus (Bovine).